We begin with the raw amino-acid sequence, 643 residues long: Threonine--tRNA ligase (643 aa).

The region spanning 1–61 (MPIITLPDGS…TEDSKLEIIT (61 aa)) is the TGS domain. A catalytic region spans residues 243 to 534 (DHRKIGKALD…ITEEYAGFFP (292 aa)). Zn(2+) contacts are provided by cysteine 334, histidine 385, and histidine 511.

Belongs to the class-II aminoacyl-tRNA synthetase family. As to quaternary structure, homodimer. Requires Zn(2+) as cofactor.

It localises to the cytoplasm. The enzyme catalyses tRNA(Thr) + L-threonine + ATP = L-threonyl-tRNA(Thr) + AMP + diphosphate + H(+). Functionally, catalyzes the attachment of threonine to tRNA(Thr) in a two-step reaction: L-threonine is first activated by ATP to form Thr-AMP and then transferred to the acceptor end of tRNA(Thr). Also edits incorrectly charged L-seryl-tRNA(Thr). This Pasteurella multocida (strain Pm70) protein is Threonine--tRNA ligase.